We begin with the raw amino-acid sequence, 170 residues long: CDP-archaeol synthase (170 aa).

5 helical membrane-spanning segments follow: residues 9-29, 53-73, 79-99, 114-134, and 140-160; these read AFWY…LGGG, GFFG…FLLP, LGIA…GDLI, PAVG…AYPV, and GEVL…NIFA.

This sequence belongs to the CDP-archaeol synthase family. The cofactor is Mg(2+).

The protein localises to the cell membrane. It catalyses the reaction 2,3-bis-O-(geranylgeranyl)-sn-glycerol 1-phosphate + CTP + H(+) = CDP-2,3-bis-O-(geranylgeranyl)-sn-glycerol + diphosphate. It functions in the pathway membrane lipid metabolism; glycerophospholipid metabolism. Functionally, catalyzes the formation of CDP-2,3-bis-(O-geranylgeranyl)-sn-glycerol (CDP-archaeol) from 2,3-bis-(O-geranylgeranyl)-sn-glycerol 1-phosphate (DGGGP) and CTP. This reaction is the third ether-bond-formation step in the biosynthesis of archaeal membrane lipids. The sequence is that of CDP-archaeol synthase from Pyrococcus horikoshii (strain ATCC 700860 / DSM 12428 / JCM 9974 / NBRC 100139 / OT-3).